The primary structure comprises 229 residues: ATEGARNIGQSAPEGKVQMDCPSRHNFDPECEKAFVEHIHLELASSYHAWSMWAFYARDCKAAVGMTRLCEWASHVSAQRARRMAAYVLTRGGHVDYKEIPAPKKQGWDNFEDAFSHCVANKKRILTSLQSLYQCCQSKDAHCSNFIQTDMMDEVIAWNKFLSDCLSNLHCIGSQGMGPWVFDRWLARIVMSKFKHPKIPSLSTSDLESNIPNELFDAEGDMVRAIKKL.

A1 is subject to N-acetylalanine. Positions 25–173 constitute a Ferritin-like diiron domain; it reads HNFDPECEKA…DCLSNLHCIG (149 aa).

This sequence belongs to the ferritin family.

The polypeptide is Artemin (Artemia salina (Brine shrimp)).